We begin with the raw amino-acid sequence, 495 residues long: Probable aminotransferase ACS12 (495 aa).

Position 334 is an N6-(pyridoxal phosphate)lysine (lysine 334).

This sequence belongs to the class-I pyridoxal-phosphate-dependent aminotransferase family. In terms of assembly, homodimer. Requires pyridoxal 5'-phosphate as cofactor. In terms of tissue distribution, expressed in roots. Expressed at low level in leaves, stems, flowers and siliques.

In terms of biological role, probable aminotransferase. Does not have 1-aminocyclopropane-1-carboxylate synthase (ACS) activity, suggesting that it is not involved in ethylene biosynthesis. This chain is Probable aminotransferase ACS12 (ACS12), found in Arabidopsis thaliana (Mouse-ear cress).